The sequence spans 308 residues: Dihydroorotate dehydrogenase A (fumarate) (308 aa).

FMN contacts are provided by residues S24 and 48–49 (KS). Residues K48, 72–76 (NANGL), and N132 each bind substrate. N132 lines the FMN pocket. The Nucleophile role is filled by C135. 2 residues coordinate FMN: K171 and I197. 198-199 (NT) is a binding site for substrate. FMN is bound by residues G223 and 249-250 (GG).

This sequence belongs to the dihydroorotate dehydrogenase family. Type 1 subfamily. In terms of assembly, homodimer. FMN serves as cofactor.

It localises to the cytoplasm. It carries out the reaction (S)-dihydroorotate + fumarate = orotate + succinate. It participates in pyrimidine metabolism; UMP biosynthesis via de novo pathway. In terms of biological role, catalyzes the conversion of dihydroorotate to orotate with fumarate as the electron acceptor. This chain is Dihydroorotate dehydrogenase A (fumarate) (pyrD), found in Limosilactobacillus reuteri (strain DSM 20016) (Lactobacillus reuteri).